The chain runs to 405 residues: NAC transcription factor NAM-A1 (405 aa).

The segment covering 1 to 10 (MGSSDSSSGS) has biased composition (low complexity). A disordered region spans residues 1–38 (MGSSDSSSGSAQKAARHQHEPPPPRQRGSAPELPPGFR). The 172-residue stretch at 33-204 (LPPGFRFHPT…DWVLCRIYKK (172 aa)) folds into the NAC domain. Residues 137-210 (LGVKKALVFY…IYKKINKAAA (74 aa)) mediate DNA binding.

Expressed in flag leaves, green spikes and peduncles.

It is found in the nucleus. In terms of biological role, transcription factor of the NAC family associated with the grain protein content (GPC). Accelerates senescence and increases nutrient remobilization from leaves to developing grains. The tetraploid cultivated wheat (T.durum) contains one additional gene coding for a functional protein (NAM-B2) and one extra pseudogene (NAM-B1). This chain is NAC transcription factor NAM-A1 (NAM-A1), found in Triticum turgidum subsp. durum (Durum wheat).